A 127-amino-acid polypeptide reads, in one-letter code: Fluoride-specific ion channel FluC (127 aa).

4 consecutive transmembrane segments (helical) span residues 4–24, 38–58, 71–91, and 104–124; these read LSVL…RYLI, YGTL…IAAF, IIGL…MDNV, and LNVL…FQLL. Residues glycine 78 and threonine 81 each coordinate Na(+).

This sequence belongs to the fluoride channel Fluc/FEX (TC 1.A.43) family.

The protein resides in the cell inner membrane. The catalysed reaction is fluoride(in) = fluoride(out). Its activity is regulated as follows. Na(+) is not transported, but it plays an essential structural role and its presence is essential for fluoride channel function. In terms of biological role, fluoride-specific ion channel. Important for reducing fluoride concentration in the cell, thus reducing its toxicity. The sequence is that of Fluoride-specific ion channel FluC from Vibrio campbellii (strain ATCC BAA-1116).